The chain runs to 267 residues: Triosephosphate isomerase (267 aa).

12-14 (NWK) is a binding site for substrate. The active-site Electrophile is the histidine 104. The active-site Proton acceptor is glutamate 176. Substrate contacts are provided by residues glycine 182, serine 222, and 243–244 (GG).

It belongs to the triosephosphate isomerase family. Homodimer.

Its subcellular location is the cytoplasm. The catalysed reaction is D-glyceraldehyde 3-phosphate = dihydroxyacetone phosphate. It participates in carbohydrate biosynthesis; gluconeogenesis. The protein operates within carbohydrate degradation; glycolysis; D-glyceraldehyde 3-phosphate from glycerone phosphate: step 1/1. In terms of biological role, involved in the gluconeogenesis. Catalyzes stereospecifically the conversion of dihydroxyacetone phosphate (DHAP) to D-glyceraldehyde-3-phosphate (G3P). In Bifidobacterium longum (strain DJO10A), this protein is Triosephosphate isomerase.